The following is a 456-amino-acid chain: Cyclic AMP-responsive element-binding protein 3-like protein 3 (456 aa).

2 disordered regions span residues 1–20 (MDGD…MGPI) and 47–120 (GHGE…KGPC). At 1–317 (MDGDLAIGKM…STSKSAQTGT (317 aa)) the chain is on the cytoplasmic side. Residues 71–85 (DSDSPTWSPAASDSG) are compositionally biased toward polar residues. The bZIP domain maps to 238 to 301 (MLKKIRRKIR…LSLLEQLKKL (64 aa)). Positions 240 to 269 (KKIRRKIRNKQSAQESRKKKKEYIDGLETR) are basic motif. A leucine-zipper region spans residues 280–301 (LQRKVLHLEKQNLSLLEQLKKL). A Glycyl lysine isopeptide (Lys-Gly) (interchain with G-Cter in ubiquitin) cross-link involves residue lysine 289. The helical; Signal-anchor for type II membrane protein transmembrane segment at 318-338 (CIAVLLFSFALIVLPSISPFA) threads the bilayer. Topologically, residues 339 to 456 (SNRAESPGDF…VGLEAAGGEL (118 aa)) are lumenal. Disordered stretches follow at residues 365–423 (RVAP…QGNS) and 435–456 (CAPP…GGEL). N-linked (GlcNAc...) asparagine glycans are attached at residues asparagine 408 and asparagine 415.

The protein belongs to the bZIP family. ATF subfamily. Binds DNA as a dimer. May form homodimers. Interacts with ATF6. Interacts with SYNV1/HRD1; this interaction leads to CREB3L3 ubiquitination and proteasomal degradation. In terms of processing, controlled by regulated intramembrane proteolysis (RIP). Following ER stress a fragment containing the cytoplasmic transcription factor domain is released by proteolysis. The cleavage seems to be performed sequentially by site-1 and site-2 proteases (PS1 and PS2). N-glycosylation is required for optimal proteolytic activation. Post-translationally, ubiquitinated at Lys-289 by SYNV1/HRD1 via 'Lys-27'-linked ubiquitin.

It localises to the endoplasmic reticulum membrane. Its subcellular location is the nucleus. Transcription factor that may act during endoplasmic reticulum stress by activating unfolded protein response target genes. Activated in response to cAMP stimulation. In vitro, binds the cAMP response element (CRE). Activates transcription through box-B element and CRE. Seems to function synergistically with ATF6. In acute inflammatory response, may activate expression of acute phase response (APR) genes. May be involved in growth suppression. Regulates FGF21 transcription. Plays a crucial role in the regulation of triglyceride metabolism and is required for the maintenance of normal plasma triglyceride concentrations. The polypeptide is Cyclic AMP-responsive element-binding protein 3-like protein 3 (CREB3L3) (Bos taurus (Bovine)).